Reading from the N-terminus, the 692-residue chain is Potassium-transporting ATPase ATP-binding subunit (692 aa).

The next 4 helical transmembrane spans lie at 50-70 (PIMFVVEIGFIITFILSFLPS), 77-97 (GWFNITVSLILLFTVLFANFA), 240-260 (LTLIFLIVVVTLPIFTNYLGF), and 266-286 (VLVALLVCLIPTTIGGLLSAI). The 4-aspartylphosphate intermediate role is filled by aspartate 319. ATP-binding positions include aspartate 356, glutamate 360, 388 to 395 (FKAETRMS), and lysine 407. 2 residues coordinate Mg(2+): aspartate 530 and aspartate 534. The next 3 helical transmembrane spans lie at 600-620 (FAIIPAMFTLAIPQMEALNIM), 628-648 (AILSALIFNAVIIPLLIPLAM), and 672-692 (GGVIVPFIGIKVIDIIVGLFI).

The protein belongs to the cation transport ATPase (P-type) (TC 3.A.3) family. Type IA subfamily. In terms of assembly, the system is composed of three essential subunits: KdpA, KdpB and KdpC.

The protein localises to the cell membrane. The catalysed reaction is K(+)(out) + ATP + H2O = K(+)(in) + ADP + phosphate + H(+). Part of the high-affinity ATP-driven potassium transport (or Kdp) system, which catalyzes the hydrolysis of ATP coupled with the electrogenic transport of potassium into the cytoplasm. This subunit is responsible for energy coupling to the transport system and for the release of the potassium ions to the cytoplasm. This is Potassium-transporting ATPase ATP-binding subunit from Bacillus cereus (strain 03BB102).